Here is a 482-residue protein sequence, read N- to C-terminus: tRNA sulfurtransferase (482 aa).

The THUMP domain maps to 61–165 (LAIRDALTRI…DDRLLLIKGR (105 aa)). ATP contacts are provided by residues 183 to 184 (LI), Lys265, Gly287, and Gln296. Cysteines 344 and 456 form a disulfide. One can recognise a Rhodanese domain in the interval 404–482 (FGANDVILDI…GFANVKVYRP (79 aa)). Catalysis depends on Cys456, which acts as the Cysteine persulfide intermediate.

Belongs to the ThiI family.

The protein resides in the cytoplasm. It carries out the reaction [ThiI sulfur-carrier protein]-S-sulfanyl-L-cysteine + a uridine in tRNA + 2 reduced [2Fe-2S]-[ferredoxin] + ATP + H(+) = [ThiI sulfur-carrier protein]-L-cysteine + a 4-thiouridine in tRNA + 2 oxidized [2Fe-2S]-[ferredoxin] + AMP + diphosphate. The catalysed reaction is [ThiS sulfur-carrier protein]-C-terminal Gly-Gly-AMP + S-sulfanyl-L-cysteinyl-[cysteine desulfurase] + AH2 = [ThiS sulfur-carrier protein]-C-terminal-Gly-aminoethanethioate + L-cysteinyl-[cysteine desulfurase] + A + AMP + 2 H(+). The protein operates within cofactor biosynthesis; thiamine diphosphate biosynthesis. Its function is as follows. Catalyzes the ATP-dependent transfer of a sulfur to tRNA to produce 4-thiouridine in position 8 of tRNAs, which functions as a near-UV photosensor. Also catalyzes the transfer of sulfur to the sulfur carrier protein ThiS, forming ThiS-thiocarboxylate. This is a step in the synthesis of thiazole, in the thiamine biosynthesis pathway. The sulfur is donated as persulfide by IscS. The polypeptide is tRNA sulfurtransferase (Salmonella typhi).